Reading from the N-terminus, the 206-residue chain is Large ribosomal subunit protein uL4 (206 aa).

A disordered region spans residues 44–80 (KRAGTHSVKTRSTISGGGAKPWRQKGTGRARSGSNRS).

This sequence belongs to the universal ribosomal protein uL4 family. Part of the 50S ribosomal subunit.

In terms of biological role, one of the primary rRNA binding proteins, this protein initially binds near the 5'-end of the 23S rRNA. It is important during the early stages of 50S assembly. It makes multiple contacts with different domains of the 23S rRNA in the assembled 50S subunit and ribosome. Its function is as follows. Forms part of the polypeptide exit tunnel. The chain is Large ribosomal subunit protein uL4 from Oleidesulfovibrio alaskensis (strain ATCC BAA-1058 / DSM 17464 / G20) (Desulfovibrio alaskensis).